The chain runs to 229 residues: MGKKYTESVKLVDKNTLYTVQEAIELVTKTSKAKFDETVELAVRLGVDPRHADQQVRGAVVLPHGTGKTVRVLVFAKGDKVNEAQEAGADFVGAEELVEKIQKENWFDFDVVVATPDMMGVVGRLGRVLGPKGLMPNPKSGTVTFDVAKAIADIKAGKVEYRVDKTAIIHVPIGKSSFGEEKLSDNFHVLMEAVVKAKPAAAKGQYIKSVAISSTMGPGIKINPGKVLE.

It belongs to the universal ribosomal protein uL1 family. Part of the 50S ribosomal subunit.

Binds directly to 23S rRNA. The L1 stalk is quite mobile in the ribosome, and is involved in E site tRNA release. Functionally, protein L1 is also a translational repressor protein, it controls the translation of the L11 operon by binding to its mRNA. The protein is Large ribosomal subunit protein uL1 of Clostridium botulinum (strain ATCC 19397 / Type A).